The primary structure comprises 3414 residues: Genome polyprotein (3414 aa).

The interval methionine 1–arginine 30 is disordered. The Cytoplasmic portion of the chain corresponds to methionine 1–alanine 98. Residues serine 97–alanine 117 constitute a propeptide, ER anchor for the capsid protein C, removed in mature form by serine protease NS3. A helical membrane pass occupies residues threonine 99–valine 119. The Extracellular portion of the chain corresponds to arginine 120 to tryptophan 242. A glycan (N-linked (GlcNAc...) asparagine; by host) is linked at asparagine 144. The chain crosses the membrane as a helical span at residues lysine 243–glutamate 260. A topological domain (cytoplasmic) is located at residue serine 261. Residues valine 262–alanine 280 traverse the membrane as a helical segment. The Extracellular portion of the chain corresponds to serine 281 to serine 727. Disulfide bonds link cysteine 283–cysteine 310, cysteine 340–cysteine 396, cysteine 340–cysteine 401, cysteine 354–cysteine 385, cysteine 372–cysteine 396, and cysteine 372–cysteine 401. The tract at residues aspartate 378–glycine 391 is fusion peptide. N-linked (GlcNAc...) asparagine; by host glycosylation occurs at asparagine 434. Disulfide bonds link cysteine 466-cysteine 570 and cysteine 587-cysteine 618. A helical transmembrane segment spans residues isoleucine 728–glycine 748. Residues leucine 749–threonine 755 lie on the Extracellular side of the membrane. The chain crosses the membrane as a helical span at residues methionine 756–alanine 776. Topologically, residues aspartate 777–glutamate 1132 are extracellular. 6 disulfides stabilise this stretch: cysteine 780–cysteine 791, cysteine 831–cysteine 920, cysteine 955–cysteine 1000, cysteine 1057–cysteine 1106, cysteine 1068–cysteine 1090, and cysteine 1089–cysteine 1093. N-linked (GlcNAc...) asparagine; by host glycans are attached at residues asparagine 861, asparagine 983, and asparagine 999. Residues leucine 1133–isoleucine 1153 form a helical membrane-spanning segment. Over arginine 1154 to serine 1158 the chain is Cytoplasmic. A helical transmembrane segment spans residues threonine 1159–valine 1179. The Lumenal portion of the chain corresponds to arginine 1180 to tyrosine 1187. The chain crosses the membrane as a helical span at residues valine 1188–leucine 1208. The Cytoplasmic portion of the chain corresponds to leucine 1209 to aspartate 1293. A helical membrane pass occupies residues valine 1294–tryptophan 1314. The Lumenal portion of the chain corresponds to arginine 1315–threonine 1327. Residues tryptophan 1328–phenylalanine 1348 traverse the membrane as a helical segment. At tryptophan 1349 to serine 1359 the chain is on the cytoplasmic side. The chain crosses the membrane as a helical span at residues phenylalanine 1360–methionine 1377. Topologically, residues methionine 1378–serine 1382 are lumenal. A helical transmembrane segment spans residues glutamine 1383 to threonine 1403. Over arginine 1404–alanine 1454 the chain is Cytoplasmic. The interval alanine 1410–glutamate 1449 is interacts with and activates NS3 protease. The segment at residues phenylalanine 1455 to methionine 1475 is an intramembrane region (helical). At glycine 1476–alanine 2160 the chain is on the cytoplasmic side. Residues serine 1490 to proline 1669 enclose the Peptidase S7 domain. Residues histidine 1543, aspartate 1567, and serine 1627 each act as charge relay system; for serine protease NS3 activity in the active site. The Helicase ATP-binding domain maps to threonine 1675–glutamate 1831. An ATP-binding site is contributed by methionine 1688 to threonine 1695. Residues aspartate 1779–histidine 1782 carry the DEAH box motif. In terms of domain architecture, Helicase C-terminal spans aspartate 1841–tyrosine 2000. Lysine 1883 is subject to N6-acetyllysine; by host. A helical membrane pass occupies residues phenylalanine 2161–phenylalanine 2181. Topologically, residues valine 2182–arginine 2189 are lumenal. The helical intramembrane region spans methionine 2190–glycine 2210. Residue tyrosine 2211 is a topological domain, lumenal. The helical transmembrane segment at glycine 2212 to alanine 2232 threads the bilayer. At glycine 2233–alanine 2244 the chain is on the cytoplasmic side. A helical membrane pass occupies residues tyrosine 2245–leucine 2265. Residues glutamate 2266–serine 2299 lie on the Lumenal side of the membrane. Residues tryptophan 2300–threonine 2320 constitute an intramembrane region (helical). The Lumenal portion of the chain corresponds to lysine 2321 to glycine 2343. The segment at residues alanine 2344 to alanine 2364 is an intramembrane region (helical). At threonine 2365 to serine 2368 the chain is on the lumenal side. The helical transmembrane segment at leucine 2369 to alanine 2389 threads the bilayer. The Cytoplasmic segment spans residues glutamate 2390–serine 2432. The chain crosses the membrane as a helical span at residues leucine 2433–isoleucine 2453. At threonine 2454–threonine 2477 the chain is on the lumenal side. The helical transmembrane segment at methionine 2478–leucine 2498 threads the bilayer. The Cytoplasmic portion of the chain corresponds to glycine 2499 to isoleucine 3414. The mRNA cap 0-1 NS5-type MT domain occupies glycine 2512–cysteine 2776. An S-adenosyl-L-methionine-binding site is contributed by serine 2567. Phosphoserine is present on serine 2567. Residue lysine 2572 is the For 2'-O-MTase activity of the active site. S-adenosyl-L-methionine is bound by residues glycine 2597, tryptophan 2598, threonine 2615, isoleucine 2616, aspartate 2642, and valine 2643. Aspartate 2657 (for 2'-O-MTase activity) is an active-site residue. Isoleucine 2658 is an S-adenosyl-L-methionine binding site. Active-site for 2'-O-MTase activity residues include lysine 2694 and glutamate 2730. Positions glutamate 2730–serine 2734 are interaction with host SCRIB. Residue tyrosine 2732 participates in S-adenosyl-L-methionine binding. Residues glutamate 2950, histidine 2954, cysteine 2959, and cysteine 2962 each contribute to the Zn(2+) site. The RdRp catalytic domain occupies glycine 3040 to alanine 3189. 3 residues coordinate Zn(2+): histidine 3224, cysteine 3240, and cysteine 3359.

The protein in the N-terminal section; belongs to the class I-like SAM-binding methyltransferase superfamily. mRNA cap 0-1 NS5-type methyltransferase family. In terms of assembly, homodimer. Interacts (via N-terminus) with host EXOC1 (via C-terminus); this interaction results in EXOC1 degradation through the proteasome degradation pathway. Forms heterodimers with envelope protein E in the endoplasmic reticulum and Golgi. As to quaternary structure, homodimer; in the endoplasmic reticulum and Golgi. Interacts with protein prM. Interacts with non-structural protein 1. In terms of assembly, homodimer; Homohexamer when secreted. Interacts with envelope protein E. Interacts (via N-terminus) with serine protease NS3. As to quaternary structure, forms a heterodimer with serine protease NS3. May form homooligomers. In terms of assembly, forms a heterodimer with NS2B. Interacts with NS4B. Interacts with unphosphorylated RNA-directed RNA polymerase NS5; this interaction stimulates RNA-directed RNA polymerase NS5 guanylyltransferase activity. Interacts with serine protease NS3. As to quaternary structure, homodimer. Interacts with host STAT2; this interaction inhibits the phosphorylation of the latter, and, when all viral proteins are present (polyprotein), targets STAT2 for degradation. Interacts with serine protease NS3. Interacts with host SCRIB; this interaction targets NS5 to the cell membrane periphery and nucleus, thereby allowing efficient host nuclear STAT1 inhibition. In terms of processing, specific enzymatic cleavages in vivo yield mature proteins. Cleavages in the lumen of endoplasmic reticulum are performed by host signal peptidase, whereas cleavages in the cytoplasmic side are performed by serine protease NS3. Signal cleavage at the 2K-4B site requires a prior NS3 protease-mediated cleavage at the 4A-2K site. Post-translationally, cleaved in post-Golgi vesicles by a host furin, releasing the mature small envelope protein M, and peptide pr. This cleavage is incomplete as up to 30% of viral particles still carry uncleaved prM. N-glycosylated. In terms of processing, N-glycosylated. The excreted form is glycosylated and this is required for efficient secretion of the protein from infected cells. Post-translationally, acetylated by host KAT5. Acetylation modulates NS3 RNA-binding and unwinding activities and plays an important positive role for viral replication. Phosphorylated on serines residues. This phosphorylation may trigger NS5 nuclear localization.

It localises to the virion. Its subcellular location is the host nucleus. The protein resides in the host cytoplasm. The protein localises to the host perinuclear region. It is found in the secreted. It localises to the virion membrane. Its subcellular location is the host endoplasmic reticulum membrane. The catalysed reaction is Selective hydrolysis of -Xaa-Xaa-|-Yaa- bonds in which each of the Xaa can be either Arg or Lys and Yaa can be either Ser or Ala.. The enzyme catalyses RNA(n) + a ribonucleoside 5'-triphosphate = RNA(n+1) + diphosphate. It catalyses the reaction a ribonucleoside 5'-triphosphate + H2O = a ribonucleoside 5'-diphosphate + phosphate + H(+). It carries out the reaction ATP + H2O = ADP + phosphate + H(+). The catalysed reaction is a 5'-end (5'-triphosphoguanosine)-ribonucleoside in mRNA + S-adenosyl-L-methionine = a 5'-end (N(7)-methyl 5'-triphosphoguanosine)-ribonucleoside in mRNA + S-adenosyl-L-homocysteine. The enzyme catalyses a 5'-end (N(7)-methyl 5'-triphosphoguanosine)-ribonucleoside in mRNA + S-adenosyl-L-methionine = a 5'-end (N(7)-methyl 5'-triphosphoguanosine)-(2'-O-methyl-ribonucleoside) in mRNA + S-adenosyl-L-homocysteine + H(+). Its function is as follows. Plays a role in virus budding by binding to the cell membrane and gathering the viral RNA into a nucleocapsid that forms the core of a mature virus particle. During virus entry, may induce genome penetration into the host cytoplasm after hemifusion induced by the surface proteins. Can migrate to the cell nucleus where it modulates host functions. Functionally, inhibits RNA silencing by interfering with host Dicer. Prevents premature fusion activity of envelope proteins in trans-Golgi by binding to envelope protein E at pH6.0. After virion release in extracellular space, gets dissociated from E dimers. In terms of biological role, acts as a chaperone for envelope protein E during intracellular virion assembly by masking and inactivating envelope protein E fusion peptide. prM is the only viral peptide matured by host furin in the trans-Golgi network probably to avoid catastrophic activation of the viral fusion activity in acidic Golgi compartment prior to virion release. prM-E cleavage is inefficient, and many virions are only partially matured. These uncleaved prM would play a role in immune evasion. Its function is as follows. May play a role in virus budding. Exerts cytotoxic effects by activating a mitochondrial apoptotic pathway through M ectodomain. May display a viroporin activity. Functionally, binds to host cell surface receptor and mediates fusion between viral and cellular membranes. Envelope protein is synthesized in the endoplasmic reticulum in the form of heterodimer with protein prM. They play a role in virion budding in the ER, and the newly formed immature particle is covered with 60 spikes composed of heterodimer between precursor prM and envelope protein E. The virion is transported to the Golgi apparatus where the low pH causes dissociation of PrM-E heterodimers and formation of E homodimers. prM-E cleavage is inefficient, and many virions are only partially matured. These uncleaved prM would play a role in immune evasion. Involved in immune evasion, pathogenesis and viral replication. Once cleaved off the polyprotein, is targeted to three destinations: the viral replication cycle, the plasma membrane and the extracellular compartment. Essential for viral replication. Required for formation of the replication complex and recruitment of other non-structural proteins to the ER-derived membrane structures. Excreted as a hexameric lipoparticle that plays a role against host immune response. Antagonizing the complement function. Binds to the host macrophages and dendritic cells. Inhibits signal transduction originating from Toll-like receptor 3 (TLR3). In terms of biological role, component of the viral RNA replication complex that functions in virion assembly and antagonizes the host immune response. Its function is as follows. Required cofactor for the serine protease function of NS3. May have membrane-destabilizing activity and form viroporins. Functionally, displays three enzymatic activities: serine protease, NTPase and RNA helicase. NS3 serine protease, in association with NS2B, performs its autocleavage and cleaves the polyprotein at dibasic sites in the cytoplasm: C-prM, NS2A-NS2B, NS2B-NS3, NS3-NS4A, NS4A-2K and NS4B-NS5. NS3 RNA helicase binds RNA and unwinds dsRNA in the 3' to 5' direction. Regulates the ATPase activity of the NS3 helicase activity. NS4A allows NS3 helicase to conserve energy during unwinding. In terms of biological role, functions as a signal peptide for NS4B and is required for the interferon antagonism activity of the latter. Its function is as follows. Induces the formation of ER-derived membrane vesicles where the viral replication takes place. Inhibits interferon (IFN)-induced host STAT1 phosphorylation and nuclear translocation, thereby preventing the establishment of cellular antiviral state by blocking the IFN-alpha/beta pathway. Inhibits STAT2 translocation in the nucleus after IFN-alpha treatment. Functionally, replicates the viral (+) and (-) genome, and performs the capping of genomes in the cytoplasm. NS5 methylates viral RNA cap at guanine N-7 and ribose 2'-O positions. Besides its role in genome replication, also prevents the establishment of cellular antiviral state by blocking the interferon-alpha/beta (IFN-alpha/beta) signaling pathway. Inhibits host TYK2 and STAT2 phosphorylation, thereby preventing activation of JAK-STAT signaling pathway. The chain is Genome polyprotein from Tick-borne encephalitis virus (strain Hypr) (TBEV).